A 162-amino-acid chain; its full sequence is Phosphopantetheine adenylyltransferase (162 aa).

Serine 11 is a substrate binding site. ATP is bound by residues 11-12 (SF) and histidine 19. The substrate site is built by lysine 43, valine 76, and arginine 90. Residues 91–93 (GLR), glutamate 101, and 126–132 (HLYISSS) contribute to the ATP site.

The protein belongs to the bacterial CoaD family. As to quaternary structure, homohexamer. The cofactor is Mg(2+).

The protein localises to the cytoplasm. The enzyme catalyses (R)-4'-phosphopantetheine + ATP + H(+) = 3'-dephospho-CoA + diphosphate. The protein operates within cofactor biosynthesis; coenzyme A biosynthesis; CoA from (R)-pantothenate: step 4/5. Reversibly transfers an adenylyl group from ATP to 4'-phosphopantetheine, yielding dephospho-CoA (dPCoA) and pyrophosphate. The protein is Phosphopantetheine adenylyltransferase of Streptococcus pneumoniae (strain Hungary19A-6).